A 338-amino-acid chain; its full sequence is L-serine dehydratase (338 aa).

Lys39 carries the post-translational modification N6-(pyridoxal phosphate)lysine.

The protein belongs to the serine/threonine dehydratase family. Pyridoxal 5'-phosphate is required as a cofactor.

The protein localises to the cytoplasm. The enzyme catalyses L-serine = pyruvate + NH4(+). The protein operates within carbohydrate biosynthesis; gluconeogenesis. This chain is L-serine dehydratase (SDL1), found in Saccharomyces cerevisiae (Baker's yeast).